Reading from the N-terminus, the 276-residue chain is Pantothenate synthetase (276 aa).

An ATP-binding site is contributed by 25–32 (MGYLHRGH). His-32 serves as the catalytic Proton donor. Gln-56 contributes to the (R)-pantoate binding site. A beta-alanine-binding site is contributed by Gln-56. ATP is bound at residue 143 to 146 (GEKD). Gln-149 lines the (R)-pantoate pocket. ATP-binding positions include Val-172 and 180–183 (LSSR).

It belongs to the pantothenate synthetase family. In terms of assembly, homodimer.

The protein localises to the cytoplasm. It catalyses the reaction (R)-pantoate + beta-alanine + ATP = (R)-pantothenate + AMP + diphosphate + H(+). It functions in the pathway cofactor biosynthesis; (R)-pantothenate biosynthesis; (R)-pantothenate from (R)-pantoate and beta-alanine: step 1/1. Functionally, catalyzes the condensation of pantoate with beta-alanine in an ATP-dependent reaction via a pantoyl-adenylate intermediate. The chain is Pantothenate synthetase from Thermus thermophilus (strain ATCC BAA-163 / DSM 7039 / HB27).